Reading from the N-terminus, the 90-residue chain is Small ribosomal subunit protein bS16 (90 aa).

This sequence belongs to the bacterial ribosomal protein bS16 family.

The protein is Small ribosomal subunit protein bS16 of Streptococcus agalactiae serotype III (strain NEM316).